The following is a 183-amino-acid chain: Large ribosomal subunit protein uL5 (183 aa).

It belongs to the universal ribosomal protein uL5 family. Part of the 50S ribosomal subunit; contacts the 5S rRNA and probably tRNA. Forms a bridge to the 30S subunit in the 70S ribosome.

Functionally, this is one of the proteins that bind and probably mediate the attachment of the 5S RNA into the large ribosomal subunit, where it forms part of the central protuberance. In the 70S ribosome it contacts protein S13 of the 30S subunit (bridge B1b), connecting the 2 subunits; this bridge is implicated in subunit movement. May contact the P site tRNA; the 5S rRNA and some of its associated proteins might help stabilize positioning of ribosome-bound tRNAs. The protein is Large ribosomal subunit protein uL5 of Thermococcus kodakarensis (strain ATCC BAA-918 / JCM 12380 / KOD1) (Pyrococcus kodakaraensis (strain KOD1)).